The following is a 664-amino-acid chain: Chaperone protein DnaK (664 aa).

Thr201 is modified (phosphothreonine; by autocatalysis). Disordered regions lie at residues 516-538 (DAEKHKEEDKKRREASDARNEAD) and 578-664 (APVE…KPND). Residues 578-592 (APVEKIKDASEELSR) show a composition bias toward basic and acidic residues. 2 stretches are compositionally biased toward low complexity: residues 600-617 (AMQSQSASAAASSAANAQ) and 638-649 (AGNSASSNSNNE).

The protein belongs to the heat shock protein 70 family.

Its function is as follows. Acts as a chaperone. The sequence is that of Chaperone protein DnaK from Chlamydia caviae (strain ATCC VR-813 / DSM 19441 / 03DC25 / GPIC) (Chlamydophila caviae).